The primary structure comprises 273 residues: 3-methyl-2-oxobutanoate hydroxymethyltransferase (273 aa).

Asp49 and Asp88 together coordinate Mg(2+). 3-methyl-2-oxobutanoate contacts are provided by residues 49-50 (DS), Asp88, and Lys118. Position 120 (Glu120) interacts with Mg(2+). Glu187 (proton acceptor) is an active-site residue.

The protein belongs to the PanB family. Homodecamer; pentamer of dimers. The cofactor is Mg(2+).

The protein localises to the cytoplasm. The catalysed reaction is 3-methyl-2-oxobutanoate + (6R)-5,10-methylene-5,6,7,8-tetrahydrofolate + H2O = 2-dehydropantoate + (6S)-5,6,7,8-tetrahydrofolate. It participates in cofactor biosynthesis; (R)-pantothenate biosynthesis; (R)-pantoate from 3-methyl-2-oxobutanoate: step 1/2. Its function is as follows. Catalyzes the reversible reaction in which hydroxymethyl group from 5,10-methylenetetrahydrofolate is transferred onto alpha-ketoisovalerate to form ketopantoate. The protein is 3-methyl-2-oxobutanoate hydroxymethyltransferase of Sinorhizobium fredii (strain NBRC 101917 / NGR234).